A 25-amino-acid polypeptide reads, in one-letter code: Cysteine-rich venom protein 25 (25 aa).

The interval 1–25 (NVDFNSESTRRKKKQKEIVDLXNSL) is disordered.

The protein belongs to the CRISP family. Post-translationally, contains 8 disulfide bonds. As to expression, expressed by the venom gland.

It is found in the secreted. This Naja haje haje (Egyptian cobra) protein is Cysteine-rich venom protein 25.